The chain runs to 178 residues: ATP synthase subunit delta (178 aa).

The protein belongs to the ATPase delta chain family. F-type ATPases have 2 components, F(1) - the catalytic core - and F(0) - the membrane proton channel. F(1) has five subunits: alpha(3), beta(3), gamma(1), delta(1), epsilon(1). F(0) has three main subunits: a(1), b(2) and c(10-14). The alpha and beta chains form an alternating ring which encloses part of the gamma chain. F(1) is attached to F(0) by a central stalk formed by the gamma and epsilon chains, while a peripheral stalk is formed by the delta and b chains.

It localises to the cell membrane. Its function is as follows. F(1)F(0) ATP synthase produces ATP from ADP in the presence of a proton or sodium gradient. F-type ATPases consist of two structural domains, F(1) containing the extramembraneous catalytic core and F(0) containing the membrane proton channel, linked together by a central stalk and a peripheral stalk. During catalysis, ATP synthesis in the catalytic domain of F(1) is coupled via a rotary mechanism of the central stalk subunits to proton translocation. This protein is part of the stalk that links CF(0) to CF(1). It either transmits conformational changes from CF(0) to CF(1) or is implicated in proton conduction. The polypeptide is ATP synthase subunit delta (Acetivibrio thermocellus (strain ATCC 27405 / DSM 1237 / JCM 9322 / NBRC 103400 / NCIMB 10682 / NRRL B-4536 / VPI 7372) (Clostridium thermocellum)).